A 110-amino-acid chain; its full sequence is MKKVLGVILGGLLLLPVVSNAADAQKAADNKKPVNSWTCEDFLAVDESFQPTAVGFAEALNNKDKPEDAVLDVQGIATVTPAIVQACTQDKQANFKDKVKGEWDKIKKDM.

An N-terminal signal peptide occupies residues 1–21 (MKKVLGVILGGLLLLPVVSNA). Cys39 and Cys87 form a disulfide bridge.

It belongs to the HdeA family.

The protein localises to the periplasm. In terms of biological role, required for optimal acid stress protection. Exhibits a chaperone-like activity only at low pH by suppressing non-specifically the aggregation of denaturated periplasmic proteins. The chain is Acid stress chaperone HdeA from Escherichia coli O157:H7.